Consider the following 135-residue polypeptide: CTP pyrophosphohydrolase (135 aa).

Positions 2-127 (KMIEVVAAII…DIPLLEAFMA (126 aa)) constitute a Nudix hydrolase domain. Substrate is bound by residues 34 to 39 (FAGGKV), Arg72, and Asp118. Residues 37–58 (GKVEPDESQRQALVRELREELG) carry the Nudix box motif.

Belongs to the Nudix hydrolase family. Monomer. It depends on Mg(2+) as a cofactor. The cofactor is Mn(2+).

It catalyses the reaction CTP + H2O = CMP + diphosphate + H(+). The catalysed reaction is dCTP + H2O = dCMP + diphosphate + H(+). Hydrolase with a preference for pyrimidine substrates. Has high activity with 5-methyl-dCTP, and much lower activity with CTP, dCTP, 5-hydroxy-dCTP, 2-hydroxy-dATP and 8-hydroxy-dGTP. In Escherichia coli (strain K12), this protein is CTP pyrophosphohydrolase (nudG).